The sequence spans 380 residues: ATP phosphoribosyltransferase regulatory subunit (380 aa).

This sequence belongs to the class-II aminoacyl-tRNA synthetase family. HisZ subfamily. As to quaternary structure, heteromultimer composed of HisG and HisZ subunits.

Its subcellular location is the cytoplasm. It participates in amino-acid biosynthesis; L-histidine biosynthesis; L-histidine from 5-phospho-alpha-D-ribose 1-diphosphate: step 1/9. In terms of biological role, required for the first step of histidine biosynthesis. May allow the feedback regulation of ATP phosphoribosyltransferase activity by histidine. This Thermoanaerobacter pseudethanolicus (strain ATCC 33223 / 39E) (Clostridium thermohydrosulfuricum) protein is ATP phosphoribosyltransferase regulatory subunit.